Here is a 224-residue protein sequence, read N- to C-terminus: Germin-like protein 8-11 (224 aa).

The N-terminal stretch at 1-22 (MASSSFLLLATLLAMASWQGMA) is a signal peptide. Cysteine 32 and cysteine 47 are oxidised to a cystine. The Cupin type-1 domain occupies 62-212 (AMLDTPRKTN…AFQVEKGTID (151 aa)). N-linked (GlcNAc...) asparagine glycosylation is present at asparagine 76. Mn(2+)-binding residues include histidine 109, histidine 111, glutamate 116, and histidine 157.

It belongs to the germin family. As to quaternary structure, oligomer (believed to be a pentamer but probably hexamer).

Its subcellular location is the secreted. It localises to the extracellular space. The protein localises to the apoplast. Functionally, plays a role in broad-spectrum disease resistance. Probably has no oxalate oxidase activity even if the active site is conserved. The sequence is that of Germin-like protein 8-11 from Oryza sativa subsp. japonica (Rice).